The following is a 75-amino-acid chain: Sperm-specific protein PL-I (75 aa).

Positions 2 to 74 (GSSGMMSMVA…GSAGWVLVPK (73 aa)) constitute an H15 domain.

The protein belongs to the histone H1/H5 family. As to expression, sperm.

Its subcellular location is the nucleus. The protein resides in the chromosome. Functionally, linker histones are implicated in chromatin remodeling and/or transcriptional regulation during spermiogenesis, the process of spermatid maturation into spermatozoa. The protein is Sperm-specific protein PL-I of Spisula solidissima (Atlantic surf-clam).